A 268-amino-acid polypeptide reads, in one-letter code: MLDSTTLVALVLGLLEGLTEFIPVSSTGHLLLAGHFLGFESAGRSFEVVIQLGAVLAVLTVYAAKLVSVIRAAPHDPRAFRFLVAVLVAFLPAVVIGVLAHGFIKAVLFETPILIATMLILGGIVLLFVDRMAPEPRYDDAMDLPLNVALKIGFIQCLAMVPGVSRSGATIVGGLMLGAGKRAAAEFSFFLSMPTMAGAFAFDLFKNRDVLDASALGEIAVGFVAAFVAAVLVVRWLLGYVSRHGYALFGWWRIAVGSVALAALLAGY.

The next 8 membrane-spanning stretches (helical) occupy residues 4 to 24 (STTLVALVLGLLEGLTEFIPV), 50 to 70 (IQLGAVLAVLTVYAAKLVSVI), 84 to 104 (VAVLVAFLPAVVIGVLAHGFI), 109 to 129 (FETPILIATMLILGGIVLLFV), 144 to 164 (LPLNVALKIGFIQCLAMVPGV), 185 to 205 (AEFSFFLSMPTMAGAFAFDLF), 214 to 234 (SALGEIAVGFVAAFVAAVLVV), and 247 to 267 (ALFGWWRIAVGSVALAALLAG).

Belongs to the UppP family.

It is found in the cell inner membrane. The catalysed reaction is di-trans,octa-cis-undecaprenyl diphosphate + H2O = di-trans,octa-cis-undecaprenyl phosphate + phosphate + H(+). In terms of biological role, catalyzes the dephosphorylation of undecaprenyl diphosphate (UPP). Confers resistance to bacitracin. This is Undecaprenyl-diphosphatase from Cereibacter sphaeroides (strain ATCC 17029 / ATH 2.4.9) (Rhodobacter sphaeroides).